A 171-amino-acid polypeptide reads, in one-letter code: Co-chaperone protein HscB homolog (171 aa).

Residues S3–L75 enclose the J domain.

Belongs to the HscB family. Interacts with HscA and stimulates its ATPase activity.

Co-chaperone involved in the maturation of iron-sulfur cluster-containing proteins. Seems to help targeting proteins to be folded toward HscA. The protein is Co-chaperone protein HscB homolog of Azotobacter vinelandii.